The primary structure comprises 147 residues: Small ribosomal subunit protein uS12 (147 aa).

The protein belongs to the universal ribosomal protein uS12 family. As to quaternary structure, part of the 30S ribosomal subunit.

With S4 and S5 plays an important role in translational accuracy. Located at the interface of the 30S and 50S subunits. The chain is Small ribosomal subunit protein uS12 from Pyrococcus horikoshii (strain ATCC 700860 / DSM 12428 / JCM 9974 / NBRC 100139 / OT-3).